We begin with the raw amino-acid sequence, 182 residues long: Large ribosomal subunit protein uL6 (182 aa).

Belongs to the universal ribosomal protein uL6 family. Part of the 50S ribosomal subunit.

Functionally, this protein binds to the 23S rRNA, and is important in its secondary structure. It is located near the subunit interface in the base of the L7/L12 stalk, and near the tRNA binding site of the peptidyltransferase center. This chain is Large ribosomal subunit protein uL6, found in Trichormus variabilis (strain ATCC 29413 / PCC 7937) (Anabaena variabilis).